Consider the following 402-residue polypeptide: Endo-polygalacturonase (402 aa).

An N-terminal signal peptide occupies residues 1 to 23 (MEYQSGKRVLSLSLGLIGLFSAS). Cystine bridges form between Cys41/Cys62 and Cys115/Cys125. Asp249 serves as the catalytic Proton donor. Residue His277 is part of the active site.

The protein belongs to the glycosyl hydrolase 28 family. Monomer.

Its subcellular location is the secreted. It catalyses the reaction (1,4-alpha-D-galacturonosyl)n+m + H2O = (1,4-alpha-D-galacturonosyl)n + (1,4-alpha-D-galacturonosyl)m.. In terms of biological role, involved in maceration and soft-rotting of plant tissue. The protein is Endo-polygalacturonase (pehA) of Pectobacterium parmentieri.